Here is a 423-residue protein sequence, read N- to C-terminus: Acetylornithine aminotransferase, mitochondrial (423 aa).

An N6-(pyridoxal phosphate)lysine modification is found at lysine 276.

It belongs to the class-III pyridoxal-phosphate-dependent aminotransferase family. Requires pyridoxal 5'-phosphate as cofactor.

Its subcellular location is the mitochondrion matrix. It catalyses the reaction N(2)-acetyl-L-ornithine + 2-oxoglutarate = N-acetyl-L-glutamate 5-semialdehyde + L-glutamate. It functions in the pathway amino-acid biosynthesis; L-arginine biosynthesis; N(2)-acetyl-L-ornithine from L-glutamate: step 4/4. This is Acetylornithine aminotransferase, mitochondrial (ARG8) from Eremothecium gossypii (strain ATCC 10895 / CBS 109.51 / FGSC 9923 / NRRL Y-1056) (Yeast).